Reading from the N-terminus, the 225-residue chain is Uridylate kinase (225 aa).

ATP is bound at residue 9-10; that stretch reads GS. G46 serves as a coordination point for UMP. Residues G47 and R51 each coordinate ATP. Residues D67 and 115–121 contribute to the UMP site; that span reads THPAHTT. ATP-binding residues include T141, N142, Y147, and D150.

Belongs to the UMP kinase family. As to quaternary structure, homohexamer.

Its subcellular location is the cytoplasm. It catalyses the reaction UMP + ATP = UDP + ADP. It functions in the pathway pyrimidine metabolism; CTP biosynthesis via de novo pathway; UDP from UMP (UMPK route): step 1/1. Its activity is regulated as follows. Inhibited by UTP. Its function is as follows. Catalyzes the reversible phosphorylation of UMP to UDP. The polypeptide is Uridylate kinase (Methanococcus maripaludis (strain C5 / ATCC BAA-1333)).